Here is a 155-residue protein sequence, read N- to C-terminus: Endoribonuclease YbeY (155 aa).

Positions 116, 120, and 126 each coordinate Zn(2+).

It belongs to the endoribonuclease YbeY family. Requires Zn(2+) as cofactor.

It is found in the cytoplasm. Its function is as follows. Single strand-specific metallo-endoribonuclease involved in late-stage 70S ribosome quality control and in maturation of the 3' terminus of the 16S rRNA. This is Endoribonuclease YbeY from Colwellia psychrerythraea (strain 34H / ATCC BAA-681) (Vibrio psychroerythus).